A 127-amino-acid polypeptide reads, in one-letter code: Protein ApaG (127 aa).

The region spanning 3–127 (DDPRYRVEVE…FVLSVPRTLH (125 aa)) is the ApaG domain.

The protein is Protein ApaG of Xanthomonas axonopodis pv. citri (strain 306).